Consider the following 83-residue polypeptide: Bublin coiled-coil protein (83 aa).

The segment at 1–24 (MSGPNGDLGMPVEAGAEGEEDGFG) is disordered. Residues 25-74 (EAEYAAINSMLDQINSCLDHLEEKNDHLHARLQELLESNRQTRLEFQQQL) are a coiled coil. Ser82 carries the post-translational modification Phosphoserine.

It belongs to the UPF0184 (EST00098) family.

It is found in the cell junction. Its subcellular location is the cytoplasm. The protein resides in the cytoskeleton. Essential for intermediate filament organization in intestinal cells, interacts with intermediate filament and regulates intestinal lumen morphology. The polypeptide is Bublin coiled-coil protein (Homo sapiens (Human)).